Reading from the N-terminus, the 643-residue chain is Phosphomethylpyrimidine synthase (643 aa).

Residues asparagine 248, methionine 277, tyrosine 306, histidine 342, serine 362 to glycine 364, aspartate 403 to arginine 406, and glutamate 442 each bind substrate. Zn(2+) is bound at residue histidine 446. Tyrosine 469 is a substrate binding site. Histidine 510 is a binding site for Zn(2+). Residues cysteine 590, cysteine 593, and cysteine 598 each coordinate [4Fe-4S] cluster.

The protein belongs to the ThiC family. As to quaternary structure, homodimer. The cofactor is [4Fe-4S] cluster.

It carries out the reaction 5-amino-1-(5-phospho-beta-D-ribosyl)imidazole + S-adenosyl-L-methionine = 4-amino-2-methyl-5-(phosphooxymethyl)pyrimidine + CO + 5'-deoxyadenosine + formate + L-methionine + 3 H(+). Its pathway is cofactor biosynthesis; thiamine diphosphate biosynthesis. Functionally, catalyzes the synthesis of the hydroxymethylpyrimidine phosphate (HMP-P) moiety of thiamine from aminoimidazole ribotide (AIR) in a radical S-adenosyl-L-methionine (SAM)-dependent reaction. The chain is Phosphomethylpyrimidine synthase from Burkholderia lata (strain ATCC 17760 / DSM 23089 / LMG 22485 / NCIMB 9086 / R18194 / 383).